The chain runs to 270 residues: Release factor glutamine methyltransferase (270 aa).

S-adenosyl-L-methionine is bound by residues 113–117, Asp136, and Asn177; that span reads GTGSG. 177–180 serves as a coordination point for substrate; it reads NPPY.

It belongs to the protein N5-glutamine methyltransferase family. PrmC subfamily.

It carries out the reaction L-glutaminyl-[peptide chain release factor] + S-adenosyl-L-methionine = N(5)-methyl-L-glutaminyl-[peptide chain release factor] + S-adenosyl-L-homocysteine + H(+). In terms of biological role, methylates the class 1 translation termination release factors RF1/PrfA and RF2/PrfB on the glutamine residue of the universally conserved GGQ motif. In Lactococcus lactis subsp. lactis (strain IL1403) (Streptococcus lactis), this protein is Release factor glutamine methyltransferase.